Reading from the N-terminus, the 464-residue chain is Serine/threonine-protein kinase 38-like (464 aa).

Residue A2 is modified to N-acetylalanine. The tract at residues 63–88 is S100B binding; that stretch reads KKLRRSQHARKETEFLRLKRTRLGLD. Position 75 is a phosphothreonine (T75). One can recognise a Protein kinase domain in the interval 90–383; sequence FESLKVIGRG…VEEIKGHPFF (294 aa). Residues 96–104 and K119 contribute to the ATP site; that span reads IGRGAFGEV. Residue D213 is the Proton acceptor of the active site. S282 is subject to Phosphoserine; by autocatalysis. An AGC-kinase C-terminal domain is found at 384–453; the sequence is EGVDWEHIRE…KRFEGLTQRG (70 aa). T442 is modified (phosphothreonine; by STK24/MST3).

Belongs to the protein kinase superfamily. AGC Ser/Thr protein kinase family. Homodimeric S100B binds two molecules of STK38L. Interacts with MICAL1; leading to inhibit the protein kinase activity by antagonizing activation by MST1/STK4. Interacts with MOB1 and MOB2. It depends on Mg(2+) as a cofactor. Ubiquitously expressed with highest levels observed in the thymus.

The protein resides in the cytoplasm. It is found in the cytoskeleton. The protein localises to the membrane. It catalyses the reaction L-seryl-[protein] + ATP = O-phospho-L-seryl-[protein] + ADP + H(+). The enzyme catalyses L-threonyl-[protein] + ATP = O-phospho-L-threonyl-[protein] + ADP + H(+). With respect to regulation, activated by binding of S100B which releases autoinhibitory N-lobe interactions, enabling ATP to bind and the autophosphorylation of Ser-282. Thr-442 then undergoes calcium-dependent phosphorylation by STK24/MST3. Interactions between phosphorylated Thr-442 and the N-lobe promote additional structural changes that complete the activation of the kinase. Autoinhibition is also released by the binding of MOB1/MOBKL1A and MOB2/HCCA2 to the N-terminal of STK38L. Functionally, involved in the regulation of structural processes in differentiating and mature neuronal cells. In Homo sapiens (Human), this protein is Serine/threonine-protein kinase 38-like.